A 321-amino-acid polypeptide reads, in one-letter code: Quinol oxidase subunit 2 (321 aa).

A signal peptide spans Met-1–Gly-25. Cys-26 carries the N-palmitoyl cysteine lipid modification. Cys-26 carries S-diacylglycerol cysteine lipidation. Transmembrane regions (helical) follow at residues Ser-49–Val-69 and Thr-90–Pro-110. The interval Gln-294–Glu-321 is disordered. The span at Ser-300–Glu-321 shows a compositional bias: basic and acidic residues.

Belongs to the cytochrome c oxidase subunit 2 family. As to quaternary structure, interacts with FloT.

It localises to the cell membrane. The protein resides in the membrane raft. The enzyme catalyses 2 a quinol + O2 = 2 a quinone + 2 H2O. Its function is as follows. Catalyzes quinol oxidation with the concomitant reduction of oxygen to water. Major component for energy conversion during vegetative growth. Subunit II transfers the electrons from a quinol to the binuclear center of the catalytic subunit I. This Bacillus subtilis (strain 168) protein is Quinol oxidase subunit 2 (qoxA).